We begin with the raw amino-acid sequence, 87 residues long: UPF0147 protein AF_2370.1 (87 aa).

It belongs to the UPF0147 family.

In Archaeoglobus fulgidus (strain ATCC 49558 / DSM 4304 / JCM 9628 / NBRC 100126 / VC-16), this protein is UPF0147 protein AF_2370.1.